A 254-amino-acid polypeptide reads, in one-letter code: 3-deoxy-manno-octulosonate cytidylyltransferase (254 aa).

Belongs to the KdsB family.

It localises to the cytoplasm. It carries out the reaction 3-deoxy-alpha-D-manno-oct-2-ulosonate + CTP = CMP-3-deoxy-beta-D-manno-octulosonate + diphosphate. It functions in the pathway nucleotide-sugar biosynthesis; CMP-3-deoxy-D-manno-octulosonate biosynthesis; CMP-3-deoxy-D-manno-octulosonate from 3-deoxy-D-manno-octulosonate and CTP: step 1/1. Its pathway is bacterial outer membrane biogenesis; lipopolysaccharide biosynthesis. Functionally, activates KDO (a required 8-carbon sugar) for incorporation into bacterial lipopolysaccharide in Gram-negative bacteria. The polypeptide is 3-deoxy-manno-octulosonate cytidylyltransferase (Chlamydia felis (strain Fe/C-56) (Chlamydophila felis)).